Reading from the N-terminus, the 304-residue chain is Putative S-adenosyl-L-methionine-dependent methyltransferase MAV_4444 (304 aa).

S-adenosyl-L-methionine is bound by residues D130 and 159-160; that span reads DL.

Belongs to the UPF0677 family.

Functionally, exhibits S-adenosyl-L-methionine-dependent methyltransferase activity. The sequence is that of Putative S-adenosyl-L-methionine-dependent methyltransferase MAV_4444 from Mycobacterium avium (strain 104).